Consider the following 269-residue polypeptide: Phosphate import ATP-binding protein PstB (269 aa).

The ABC transporter domain maps to 21–264 (SEVRNLSFYY…PKNKQTEDYI (244 aa)). An ATP-binding site is contributed by 53–60 (GPSGCGKS).

It belongs to the ABC transporter superfamily. Phosphate importer (TC 3.A.1.7) family. As to quaternary structure, the complex is composed of two ATP-binding proteins (PstB), two transmembrane proteins (PstC and PstA) and a solute-binding protein (PstS).

It localises to the cell inner membrane. The catalysed reaction is phosphate(out) + ATP + H2O = ADP + 2 phosphate(in) + H(+). Its function is as follows. Part of the ABC transporter complex PstSACB involved in phosphate import. Responsible for energy coupling to the transport system. The polypeptide is Phosphate import ATP-binding protein PstB (Nitrosospira multiformis (strain ATCC 25196 / NCIMB 11849 / C 71)).